Here is a 218-residue protein sequence, read N- to C-terminus: Large ribosomal subunit protein uL3 (218 aa).

At Q153 the chain carries N5-methylglutamine.

It belongs to the universal ribosomal protein uL3 family. In terms of assembly, part of the 50S ribosomal subunit. Forms a cluster with proteins L14 and L19. Methylated by PrmB.

Its function is as follows. One of the primary rRNA binding proteins, it binds directly near the 3'-end of the 23S rRNA, where it nucleates assembly of the 50S subunit. This is Large ribosomal subunit protein uL3 from Alkalilimnicola ehrlichii (strain ATCC BAA-1101 / DSM 17681 / MLHE-1).